Here is a 543-residue protein sequence, read N- to C-terminus: Thiamine transport system permease protein ThiP (543 aa).

The next 12 membrane-spanning stretches (helical) occupy residues 19-39 (VAGGLALAFLATLAGGALLAL), 64-84 (FTIWQAVASSLLSVLFAIPIA), 102-122 (LFALPLALPALVAVLGVTSIY), 142-162 (DIYGIAGILIAHIFFNMPLAV), 205-225 (GMIGLVFMLCVTSFTTVLTLG), 250-270 (AVALTFTQLALTLLILLILRL), 300-320 (IIVIALGFLYVALPIAGVVVS), 343-363 (LALGFSAALLAVFLSLALVAA), 379-399 (GASLILVMPPIVIGAGWFILL), 406-426 (FVMAPLMVVTVNAAMAMPFAV), 468-488 (GMAFAFAMALSLGDLGTIALF), and 510-530 (FDAAGLALILGVLCLALMMIA). The region spanning 62-266 (ARFTIWQAVA…QLALTLLILL (205 aa)) is the ABC transmembrane type-1 1 domain. Residues 339-530 (IATSLALGFS…VLCLALMMIA (192 aa)) enclose the ABC transmembrane type-1 2 domain.

This sequence belongs to the binding-protein-dependent transport system permease family. CysTW subfamily. The complex is composed of two ATP-binding proteins (ThiQ), two transmembrane proteins (ThiP) and a solute-binding protein (ThiB).

It is found in the cell inner membrane. Part of the ABC transporter complex ThiBPQ involved in thiamine import. Probably responsible for the translocation of the substrate across the membrane. The sequence is that of Thiamine transport system permease protein ThiP (thiP) from Brucella abortus (strain 2308).